The sequence spans 552 residues: Serine/threonine-protein kinase RIO2 (552 aa).

In terms of domain architecture, Protein kinase spans 97–272 (VGNQMGVGKE…DRDVKCIKDF (176 aa)). Residue K123 participates in ATP binding. The Proton acceptor role is filled by D228. S332, S335, S337, S350, S362, S380, S382, S385, and S390 each carry phosphoserine. The short motif at 399–408 (ALEEIKGQVV) is the Nuclear export signal element. S412, S417, and S442 each carry phosphoserine. Y445 is modified (phosphotyrosine). S548 is subject to Phosphoserine.

The protein belongs to the protein kinase superfamily. RIO-type Ser/Thr kinase family. In terms of assembly, associated with late 40S pre-ribosomal particles. Interacts with PLK1 (via its N-terminus). Mg(2+) serves as cofactor. Post-translationally, autophosphorylated (in vitro). Phosphorylation at Ser-335, Ser-380, Ser-548 by PLK1 affects the timing of the metaphase-anaphase transition.

It is found in the cytoplasm. It catalyses the reaction L-seryl-[protein] + ATP = O-phospho-L-seryl-[protein] + ADP + H(+). The catalysed reaction is L-threonyl-[protein] + ATP = O-phospho-L-threonyl-[protein] + ADP + H(+). In terms of biological role, serine/threonine-protein kinase involved in the final steps of cytoplasmic maturation of the 40S ribosomal subunit. Involved in export of the 40S pre-ribosome particles (pre-40S) from the nucleus to the cytoplasm. Its kinase activity is required for the release of NOB1, PNO1 and LTV1 from the late pre-40S and the processing of 18S-E pre-rRNA to the mature 18S rRNA. Regulates the timing of the metaphase-anaphase transition during mitotic progression, and its phosphorylation, most likely by PLK1, regulates this function. The chain is Serine/threonine-protein kinase RIO2 from Homo sapiens (Human).